The primary structure comprises 100 residues: MEQQQQQLRNLRDFLLVYNRMTELCFQRCVPSLHHRALDAEEEACLHSCAGKLIHSNHRLMAAYVHLMPALVQRRIADYEAASAAPGIPAEQTRDSPSGS.

Positions 25–49 match the Twin CX3C motif motif; sequence CFQRCVPSLHHRALDAEEEACLHSC. Disulfide bonds link Cys-25/Cys-49 and Cys-29/Cys-45.

The protein belongs to the small Tim family. As to quaternary structure, component of the TIM22 complex, which core is composed of TIMM22, associated with TIMM10 (TIMM10A and/or TIMM10B), TIMM9, AGK and TIMM29.

It localises to the mitochondrion inner membrane. Component of the TIM22 complex, a complex that mediates the import and insertion of multi-pass transmembrane proteins into the mitochondrial inner membrane. The TIM22 complex forms a twin-pore translocase that uses the membrane potential as the external driving force. In the TIM22 complex, it may act as a docking point for the soluble 70 kDa complex that guides the target proteins in transit through the aqueous mitochondrial intermembrane space. The sequence is that of Mitochondrial import inner membrane translocase subunit Tim10 B (Timm10b) from Mus musculus (Mouse).